The following is a 120-amino-acid chain: Large ribosomal subunit protein eL34x (120 aa).

Positions 31–50 are disordered; the sequence is TYQTTNKRASGPKCPVTGKR.

This sequence belongs to the eukaryotic ribosomal protein eL34 family.

In Arabidopsis thaliana (Mouse-ear cress), this protein is Large ribosomal subunit protein eL34x (RPL34C).